Here is a 643-residue protein sequence, read N- to C-terminus: Beta-1,3-galactosyltransferase GALT1 (643 aa).

Over 1–6 (MKRFYG) the chain is Cytoplasmic. Residues 7–23 (GLLVVSMCMFLTVYRYV) traverse the membrane as a helical; Signal-anchor for type II membrane protein segment. At 24–643 (DLNTPVEKPY…TKRSLCCREW (620 aa)) the chain is on the lumenal side. N-linked (GlcNAc...) asparagine glycans are attached at residues asparagine 45, asparagine 87, asparagine 144, asparagine 162, asparagine 277, asparagine 287, and asparagine 508. Residues 171-364 (LKLQIPCGLT…DFRLISILAS (194 aa)) enclose the Galectin domain.

It belongs to the glycosyltransferase 31 family. As to quaternary structure, interacts with GMII. It depends on Mn(2+) as a cofactor. As to expression, expressed in stems and siliques.

It is found in the golgi apparatus membrane. It functions in the pathway protein modification; protein glycosylation. Functionally, beta-1,3-galactosyltransferase that transfers galactose from UDP-galactose to substrates with a terminal beta-N-acetylglucosamine (beta-GlcNAc) residue. Involved in the biosynthesis of N-glycans containing Lewis a structures (with the combination of FUT13). This Arabidopsis thaliana (Mouse-ear cress) protein is Beta-1,3-galactosyltransferase GALT1.